A 289-amino-acid polypeptide reads, in one-letter code: Glucosamine-6-phosphate deaminase 1 (289 aa).

Lys64 is subject to N6-acetyllysine. Asp72 functions as the Proton acceptor; for enolization step in the catalytic mechanism. Asp141 (for ring-opening step) is an active-site residue. His143 functions as the Proton acceptor; for ring-opening step in the catalytic mechanism. The active-site For ring-opening step is Glu148. Residue Thr161 is modified to Phosphothreonine.

It belongs to the glucosamine/galactosamine-6-phosphate isomerase family. As to quaternary structure, homohexamer.

Its subcellular location is the cytoplasm. The catalysed reaction is alpha-D-glucosamine 6-phosphate + H2O = beta-D-fructose 6-phosphate + NH4(+). It functions in the pathway nucleotide-sugar biosynthesis; UDP-N-acetyl-alpha-D-glucosamine biosynthesis; alpha-D-glucosamine 6-phosphate from D-fructose 6-phosphate: step 1/1. Its activity is regulated as follows. Allosterically activated by N-acetylglucosamine-6-phosphate (GlcNAc6P). Its function is as follows. Catalyzes the reversible conversion of alpha-D-glucosamine 6-phosphate (GlcN-6P) into beta-D-fructose 6-phosphate (Fru-6P) and ammonium ion, a regulatory reaction step in de novo uridine diphosphate-N-acetyl-alpha-D-glucosamine (UDP-GlcNAc) biosynthesis via hexosamine pathway. Deamination is coupled to aldo-keto isomerization mediating the metabolic flux from UDP-GlcNAc toward Fru-6P. At high ammonium level can drive amination and isomerization of Fru-6P toward hexosamines and UDP-GlcNAc synthesis. Has a role in fine tuning the metabolic fluctuations of cytosolic UDP-GlcNAc and their effects on hyaluronan synthesis that occur during tissue remodeling. Seems to trigger calcium oscillations in mammalian eggs. These oscillations serve as the essential trigger for egg activation and early development of the embryo. The chain is Glucosamine-6-phosphate deaminase 1 from Bos taurus (Bovine).